The sequence spans 311 residues: tRNA dimethylallyltransferase (311 aa).

Residue G11–T18 coordinates ATP. Position 13–18 (T13–T18) interacts with substrate. An interaction with substrate tRNA region spans residues D36–Q39.

Belongs to the IPP transferase family. In terms of assembly, monomer. It depends on Mg(2+) as a cofactor.

It catalyses the reaction adenosine(37) in tRNA + dimethylallyl diphosphate = N(6)-dimethylallyladenosine(37) in tRNA + diphosphate. Functionally, catalyzes the transfer of a dimethylallyl group onto the adenine at position 37 in tRNAs that read codons beginning with uridine, leading to the formation of N6-(dimethylallyl)adenosine (i(6)A). This chain is tRNA dimethylallyltransferase, found in Clostridioides difficile (strain 630) (Peptoclostridium difficile).